We begin with the raw amino-acid sequence, 1171 residues long: Structural maintenance of chromosomes protein 2-2 (1171 aa).

Residues 2-1158 (HIKEICLEGF…DVLFRTKFVD (1157 aa)) enclose the Zinc-hook domain. 32–39 (GLNGSGKS) is an ATP binding site. A coiled-coil region spans residues 172–510 (RMYENKKEAA…LANVQFTYRD (339 aa)). Positions 518–635 (SKVKGVVAKL…KTTDAAKEVA (118 aa)) constitute an SMC hinge domain. A coiled-coil region spans residues 674 to 1026 (HDLAEAETKF…LDEKKKETLK (353 aa)).

This sequence belongs to the SMC family. SMC2 subfamily. Forms a heterodimer with SMC4. Component of the condensin complex, which contains the SMC2 and SMC4 heterodimer, and three non SMC subunits that probably regulate the complex: CAPH, CAPD2 and CAPG. Highly expressed in roots and young floral buds.

The protein resides in the nucleus. Its function is as follows. Central component of the condensin complex, a complex required for conversion of interphase chromatin into mitotic-like condense chromosomes. The condensin complex probably introduces positive supercoils into relaxed DNA in the presence of type I topoisomerases and converts nicked DNA into positive knotted forms in the presence of type II topoisomerases. Also involved in chromosome segregation in meiosis. The protein is Structural maintenance of chromosomes protein 2-2 (SMC2-2) of Arabidopsis thaliana (Mouse-ear cress).